We begin with the raw amino-acid sequence, 234 residues long: Large ribosomal subunit protein uL1 (234 aa).

This sequence belongs to the universal ribosomal protein uL1 family. In terms of assembly, part of the 50S ribosomal subunit.

In terms of biological role, binds directly to 23S rRNA. The L1 stalk is quite mobile in the ribosome, and is involved in E site tRNA release. Protein L1 is also a translational repressor protein, it controls the translation of the L11 operon by binding to its mRNA. The sequence is that of Large ribosomal subunit protein uL1 from Helicobacter hepaticus (strain ATCC 51449 / 3B1).